We begin with the raw amino-acid sequence, 175 residues long: Bifunctional protein PyrR (175 aa).

A PRPP-binding motif is present at residues 97–109 (IVLIDDVLFTGRT).

The protein belongs to the purine/pyrimidine phosphoribosyltransferase family. PyrR subfamily. As to quaternary structure, homodimer and homohexamer; in equilibrium.

The catalysed reaction is UMP + diphosphate = 5-phospho-alpha-D-ribose 1-diphosphate + uracil. Its function is as follows. Regulates transcriptional attenuation of the pyrimidine nucleotide (pyr) operon by binding in a uridine-dependent manner to specific sites on pyr mRNA. This disrupts an antiterminator hairpin in the RNA and favors formation of a downstream transcription terminator, leading to a reduced expression of downstream genes. Also displays a weak uracil phosphoribosyltransferase activity which is not physiologically significant. The polypeptide is Bifunctional protein PyrR (Leuconostoc citreum (strain KM20)).